Consider the following 520-residue polypeptide: MEELQGYLEKDRSRQQHFLYPLLFQEYIYALAHNHGLNGSIFYEPVEVFGYDNKSSLVLVKRLIIRIYQQNFWISLVNDSNQNRFVGYNHNNFFXSHFYSQMISESFAIIVEIPFSLRLVSYFEEKEIPKYHNLRSIHSIFPFLEDKLSHLNYVSDILIPHPIHMEILVQILQCWIQDVPFLHLLRFFLHEYHNLNSLLITQKKSIYVFSKENKRLFRFLYNSYVFEWEFLLVFIRKQSSYLRLTSSGTFLERTHFYEKIEHLQIEHFVVVCRNYFHRTLWFCKDPFMHYVRYQGKAILASKGTHLLMKKCKYHFFNFWQYYFHVWSQPYRIHLNQLSNYSFYFLGYLSSLLLNFSAVRNQMLENSFLIDTITKKFDTIVPVIFLIGSLAKAKFCTVSGHPISKPIWTDLSDSDILDRFGRICRNLSHYHSGSSKKQGLYRIKYILRLSCARTLARKHKSTVRTFLRRLGSGLLEEFFTEEEQVLSLIFPKATPFILHGSHRERIWYLDIICINDLVNHS.

The protein belongs to the intron maturase 2 family. MatK subfamily.

The protein localises to the plastid. It is found in the chloroplast. Its function is as follows. Usually encoded in the trnK tRNA gene intron. Probably assists in splicing its own and other chloroplast group II introns. The protein is Maturase K of Beaucarnea recurvata (Elephant-foot tree).